Consider the following 208-residue polypeptide: UPF0637 protein BCB4264_A4063 (208 aa).

It belongs to the UPF0637 family.

The polypeptide is UPF0637 protein BCB4264_A4063 (Bacillus cereus (strain B4264)).